The following is a 524-amino-acid chain: Bifunctional purine biosynthesis protein PurH (524 aa).

In terms of domain architecture, MGS-like spans 1-149 (MSDPLIKRAL…KNNESVTVLT (149 aa)).

It belongs to the PurH family.

It catalyses the reaction (6R)-10-formyltetrahydrofolate + 5-amino-1-(5-phospho-beta-D-ribosyl)imidazole-4-carboxamide = 5-formamido-1-(5-phospho-D-ribosyl)imidazole-4-carboxamide + (6S)-5,6,7,8-tetrahydrofolate. It carries out the reaction IMP + H2O = 5-formamido-1-(5-phospho-D-ribosyl)imidazole-4-carboxamide. It participates in purine metabolism; IMP biosynthesis via de novo pathway; 5-formamido-1-(5-phospho-D-ribosyl)imidazole-4-carboxamide from 5-amino-1-(5-phospho-D-ribosyl)imidazole-4-carboxamide (10-formyl THF route): step 1/1. It functions in the pathway purine metabolism; IMP biosynthesis via de novo pathway; IMP from 5-formamido-1-(5-phospho-D-ribosyl)imidazole-4-carboxamide: step 1/1. The sequence is that of Bifunctional purine biosynthesis protein PurH from Chlorobium phaeovibrioides (strain DSM 265 / 1930) (Prosthecochloris vibrioformis (strain DSM 265)).